The chain runs to 100 residues: Aspartyl/glutamyl-tRNA(Asn/Gln) amidotransferase subunit C (100 aa).

Belongs to the GatC family. Heterotrimer of A, B and C subunits.

The catalysed reaction is L-glutamyl-tRNA(Gln) + L-glutamine + ATP + H2O = L-glutaminyl-tRNA(Gln) + L-glutamate + ADP + phosphate + H(+). The enzyme catalyses L-aspartyl-tRNA(Asn) + L-glutamine + ATP + H2O = L-asparaginyl-tRNA(Asn) + L-glutamate + ADP + phosphate + 2 H(+). Functionally, allows the formation of correctly charged Asn-tRNA(Asn) or Gln-tRNA(Gln) through the transamidation of misacylated Asp-tRNA(Asn) or Glu-tRNA(Gln) in organisms which lack either or both of asparaginyl-tRNA or glutaminyl-tRNA synthetases. The reaction takes place in the presence of glutamine and ATP through an activated phospho-Asp-tRNA(Asn) or phospho-Glu-tRNA(Gln). This is Aspartyl/glutamyl-tRNA(Asn/Gln) amidotransferase subunit C from Streptococcus agalactiae serotype III (strain NEM316).